Here is a 94-residue protein sequence, read N- to C-terminus: U1-theraphotoxin-Sp1a (94 aa).

A signal peptide spans 1 to 22 (MIFLLPSIISVMLLAEPVLMLG). Residues 23 to 58 (DTEDADLMEMVQLSRPFFNPIIRAVELVELREERQR) constitute a propeptide that is removed on maturation. Cystine bridges form between Cys-60-Cys-78, Cys-67-Cys-83, and Cys-77-Cys-88. The residue at position 92 (Val-92) is a Valine amide.

This sequence belongs to the neurotoxin 14 (magi-1) family. OAIP-1 subfamily. As to expression, expressed by the venom gland.

The protein localises to the secreted. Functionally, probable ion channel inhibitor. Shows insecticidal activity. Acts synergistically with the neonicotinoid insecticide imidacloprid. Is neither a repellent that repels insects nor an attractant that is preferentially consumed by insects. Is very stable. This Selenotypus plumipes (Australian featherleg tarantula) protein is U1-theraphotoxin-Sp1a.